The chain runs to 132 residues: Small ribosomal subunit protein uS12 (132 aa).

Asp-89 bears the 3-methylthioaspartic acid mark. The segment at 101–132 (TLDASGAAGPSSTNKATRNRKRSKYGVKRPKA) is disordered. Basic residues predominate over residues 117–132 (TRNRKRSKYGVKRPKA).

Belongs to the universal ribosomal protein uS12 family. Part of the 30S ribosomal subunit. Contacts proteins S8 and S17. May interact with IF1 in the 30S initiation complex.

Its function is as follows. With S4 and S5 plays an important role in translational accuracy. Functionally, interacts with and stabilizes bases of the 16S rRNA that are involved in tRNA selection in the A site and with the mRNA backbone. Located at the interface of the 30S and 50S subunits, it traverses the body of the 30S subunit contacting proteins on the other side and probably holding the rRNA structure together. The combined cluster of proteins S8, S12 and S17 appears to hold together the shoulder and platform of the 30S subunit. This chain is Small ribosomal subunit protein uS12, found in Sorangium cellulosum (strain So ce56) (Polyangium cellulosum (strain So ce56)).